The primary structure comprises 224 residues: MAFVKSGWLLRQSTILRRWKKNWFDLWSDGRLIFYDDQNRHDIEDKIHMRIHCINLRVGNECRDFQPPEGKQRDCLLQIVCRDGKTVNLCAESADDCLAWKIALQDARTNTGYVGSDVMYDETAISSAPPPYTAYATPSPEVYGYGYGQYHGAYPTVGPQVFYASNGQAYDVPYQYPYHGPYGQPPANHVIIRERYRDNDGDLALGMLAGAATGMALGSLFWVF.

A PH domain is found at 2 to 109; sequence AFVKSGWLLR…WKIALQDART (108 aa). Lysine 20 lines the a 1,2-diacyl-sn-glycero-3-phospho-L-serine pocket.

The protein localises to the recycling endosome membrane. Its function is as follows. Involved in retrograde transport of recycling endosomes. This Gallus gallus (Chicken) protein is Pleckstrin homology domain-containing family B member 2 (PLEKHB2).